The sequence spans 382 residues: Pyrimidine monooxygenase RutA (382 aa).

FMN-binding positions include I68–K69, N134, E143, R159–Y160, and S209.

The protein belongs to the NtaA/SnaA/DszA monooxygenase family. RutA subfamily.

It carries out the reaction uracil + FMNH2 + NADH + O2 = (Z)-3-ureidoacrylate + FMN + NAD(+) + H2O + H(+). It catalyses the reaction thymine + FMNH2 + NADH + O2 = (Z)-2-methylureidoacrylate + FMN + NAD(+) + H2O + H(+). Its function is as follows. Catalyzes the pyrimidine ring opening between N-3 and C-4 by an unusual flavin hydroperoxide-catalyzed mechanism, adding oxygen atoms in the process to yield ureidoacrylate peracid, that immediately reacts with FMN forming ureidoacrylate and FMN-N(5)-oxide. The FMN-N(5)-oxide reacts spontaneously with NADH to produce FMN. Requires the flavin reductase RutF to regenerate FMN in vivo. The polypeptide is Pyrimidine monooxygenase RutA (Escherichia coli O8 (strain IAI1)).